The sequence spans 401 residues: MARPDLHERISSLRKLRVAQERVRVRRQVGRRDGVRLEIDGRWLTGFCSNDYLGLSQQFEVVAALQDAAARDGAGATASHLICGHHTAHETLERDIAEWLGYPSALLFGSGFIANLAVQQALLSEEDDVCVQDRLNHASLLDATRLAGCRLRRYPHLDVEGAMRQLKGAPEGAAMLASDGVFSMDGDVAPLRALSLVARMQEALFYVDDAHGVGVLGPQGRGCVADAGLGVAEVPLQLVTLGKALGGYGAVVVGEEALIRHLAETARPYIYTTALPPAQVAATLAAVRLARRDDWRRTRLTELIGTFRDGARRHGFELMASDTPIQPLLCGEEPTVMAMSAALEQAGFMVGAIRPPTVPEGKARLRVTLSALHTPQQVQALVDAIVQARDVVSRQPQRALA.

R24 is a binding site for substrate. 111-112 (GF) contributes to the pyridoxal 5'-phosphate binding site. A substrate-binding site is contributed by H137. Pyridoxal 5'-phosphate contacts are provided by S183, H211, and T240. At K243 the chain carries N6-(pyridoxal phosphate)lysine. T357 is a substrate binding site.

It belongs to the class-II pyridoxal-phosphate-dependent aminotransferase family. BioF subfamily. In terms of assembly, homodimer. Pyridoxal 5'-phosphate is required as a cofactor.

It catalyses the reaction 6-carboxyhexanoyl-[ACP] + L-alanine + H(+) = (8S)-8-amino-7-oxononanoate + holo-[ACP] + CO2. Its pathway is cofactor biosynthesis; biotin biosynthesis. Its function is as follows. Catalyzes the decarboxylative condensation of pimeloyl-[acyl-carrier protein] and L-alanine to produce 8-amino-7-oxononanoate (AON), [acyl-carrier protein], and carbon dioxide. The sequence is that of 8-amino-7-oxononanoate synthase from Xanthomonas campestris pv. campestris (strain 8004).